The primary structure comprises 343 residues: MAKRQLNRRQNWRIEKIQGERAARAAKRESSAVEALEGGDLGPEQHGLVIAHFGVQVEVEAVDGELAGQVFRCHLRANLPALVTGDQVVWRAGNQGIGVIVAQLPRTTELCRPDSRGQLKPVAANVDMIVIVFAPLPEPHANLIDRYLVAAEHAGIRPLLLLNKFDLIDEQNAPALNALLAVYRTLGYPVLEVSAHHGNGMEQLQKQLDGRISVFVGQSGVGKSSLVNSLLPEVETRVGPLSELSGQGTHTTTTARLFHFPGGGELIDSPGIREFGLGHVSRADVEAGFIEFNDLLGTCRFRDCKHDREPGCALLKALEDGRVQQQRMNSYRSIIASLPENGY.

Residues arginine 116–phenylalanine 275 form the CP-type G domain. GTP is bound by residues asparagine 163 to aspartate 166 and glycine 217 to serine 225. The Zn(2+) site is built by cysteine 299, cysteine 304, histidine 306, and cysteine 312.

It belongs to the TRAFAC class YlqF/YawG GTPase family. RsgA subfamily. Monomer. Associates with 30S ribosomal subunit, binds 16S rRNA. Zn(2+) is required as a cofactor.

It is found in the cytoplasm. In terms of biological role, one of several proteins that assist in the late maturation steps of the functional core of the 30S ribosomal subunit. Helps release RbfA from mature subunits. May play a role in the assembly of ribosomal proteins into the subunit. Circularly permuted GTPase that catalyzes slow GTP hydrolysis, GTPase activity is stimulated by the 30S ribosomal subunit. This is Small ribosomal subunit biogenesis GTPase RsgA from Pseudomonas fluorescens (strain Pf0-1).